A 62-amino-acid polypeptide reads, in one-letter code: MKLFTQNDRYFGLLDSCTHIFCITCINIWHKTRRETGASDNCPICRTRFRNITMSKFYKLVN.

The RING-type; degenerate zinc-finger motif lies at 1–46; sequence MKLFTQNDRYFGLLDSCTHIFCITCINIWHKTRRETGASDNCPICR.

This is Zinc finger-containing protein P28b from Vaccinia virus (strain Western Reserve) (VACV).